We begin with the raw amino-acid sequence, 775 residues long: Meiotic driver SPOK2 (775 aa).

Positions 4-69 form a coiled coil; the sequence is KDRIAQLLRE…RCERERLQLE (66 aa). Disordered stretches follow at residues 18–51, 211–249, 442–525, and 734–761; these read KARE…REEE, QKDD…YICS, LSSA…AMAD, and PPPK…AQLF. Residues 444–457 show a composition bias toward polar residues; sequence SAPSSQNTDISEYT.

The protein resides in the cytoplasm. The protein localises to the nucleus. Its function is as follows. Promotes unequal transmission of alleles from the parental zygote to progeny spores by acting as poison/antidote system, leading to poisoning of progeny that do not inherit the allele. May possess DNA nuclease activity that leads to spore killing, and a kinase activity that confers resistance to the nuclease activity. The chain is Meiotic driver SPOK2 from Podospora anserina (strain S / ATCC MYA-4624 / DSM 980 / FGSC 10383) (Pleurage anserina).